The primary structure comprises 132 residues: MVNDTIADMLTGIRNANLAKHKVARVKATKITRCLANVLKEEGLIQNFEEIENNLQNELLISLKYKGKKRQPIITALKRISKPGLRGYANHKELPRVLGGLGIAILSTSSGIMTDQTARHKGCGGEVLCYIW.

The protein belongs to the universal ribosomal protein uS8 family. Part of the 30S ribosomal subunit.

The protein localises to the plastid. It localises to the cyanelle. In terms of biological role, one of the primary rRNA binding proteins, it binds directly to 16S rRNA central domain where it helps coordinate assembly of the platform of the 30S subunit. This Cyanophora paradoxa protein is Small ribosomal subunit protein uS8c (rps8).